We begin with the raw amino-acid sequence, 102 residues long: Early lactation protein (102 aa).

Positions 1 to 20 are cleaved as a signal peptide; the sequence is MKFTIIALCLALSLVGMTSS. Residues Asn34 and Asn62 are each glycosylated (N-linked (GlcNAc...) asparagine). The region spanning 43 to 93 is the BPTI/Kunitz inhibitor domain; it reads CLLPSGRGNCDSQILRYFYNATSHTCEVFLYSGCNGNGNNFDSLECCLKTC. Cystine bridges form between Cys43–Cys93, Cys52–Cys76, and Cys68–Cys89.

N-glycosylated. Expressed by the mammary gland.

The protein resides in the secreted. In Trichosurus vulpecula (Brush-tailed possum), this protein is Early lactation protein (ELP).